Reading from the N-terminus, the 318-residue chain is Type II methyltransferase M.HaeII (318 aa).

An SAM-dependent MTase C5-type domain is found at 4–304 (YKTIDLFAGI…GSMINSLNMA (301 aa)). The active site involves C73.

It belongs to the class I-like SAM-binding methyltransferase superfamily. C5-methyltransferase family.

The enzyme catalyses a 2'-deoxycytidine in DNA + S-adenosyl-L-methionine = a 5-methyl-2'-deoxycytidine in DNA + S-adenosyl-L-homocysteine + H(+). Functionally, a methylase, recognizes the double-stranded sequence 5'-RGCGCY-3', methylates C-? on both strands, and protects the DNA from cleavage by the HaeII endonuclease. The chain is Type II methyltransferase M.HaeII (haeIIM) from Haemophilus aegyptius.